We begin with the raw amino-acid sequence, 562 residues long: Oxygen-dependent choline dehydrogenase (562 aa).

Residue 4–33 (DYIIIGAGSAGNVLATRLTEDPNTTVLLLE) participates in FAD binding. H473 serves as the catalytic Proton acceptor.

It belongs to the GMC oxidoreductase family. The cofactor is FAD.

The catalysed reaction is choline + A = betaine aldehyde + AH2. It catalyses the reaction betaine aldehyde + NAD(+) + H2O = glycine betaine + NADH + 2 H(+). The protein operates within amine and polyamine biosynthesis; betaine biosynthesis via choline pathway; betaine aldehyde from choline (cytochrome c reductase route): step 1/1. Involved in the biosynthesis of the osmoprotectant glycine betaine. Catalyzes the oxidation of choline to betaine aldehyde and betaine aldehyde to glycine betaine at the same rate. The chain is Oxygen-dependent choline dehydrogenase from Escherichia coli (strain SMS-3-5 / SECEC).